The primary structure comprises 349 residues: Phenylalanine--tRNA ligase alpha subunit (349 aa).

Glu258 contacts Mg(2+).

It belongs to the class-II aminoacyl-tRNA synthetase family. Phe-tRNA synthetase alpha subunit type 1 subfamily. In terms of assembly, tetramer of two alpha and two beta subunits. Mg(2+) serves as cofactor.

It is found in the cytoplasm. The enzyme catalyses tRNA(Phe) + L-phenylalanine + ATP = L-phenylalanyl-tRNA(Phe) + AMP + diphosphate + H(+). The protein is Phenylalanine--tRNA ligase alpha subunit of Rickettsia rickettsii (strain Sheila Smith).